We begin with the raw amino-acid sequence, 733 residues long: Two pore calcium channel protein 1 (733 aa).

M1 bears the N-acetylmethionine mark. Over 1 to 71 the chain is Cytoplasmic; it reads MEDPLIGRDS…RYYFIFTRLD (71 aa). Residues 72 to 92 traverse the membrane as a helical segment; it reads LIWSLNYFALLFLNFFEQPLW. Residues 93 to 120 lie on the Vacuolar side of the membrane; that stretch reads CEKNPKPSCKDRDYYYLGELPYLTNAES. A helical transmembrane segment spans residues 121-141; that stretch reads IIYEVITLAILLVHTFFPISY. Residues 142–158 are Cytoplasmic-facing; sequence EGSRIFWTSRLNLVKVA. The helical transmembrane segment at 159–179 threads the bilayer; the sequence is CVVILFVDVLVDFLYLSPLAF. D180 is a topological domain (vacuolar). Residues 181-199 form a helical; Voltage-sensor membrane-spanning segment; sequence FLPFRIAPYVRVIIFILSI. The Cytoplasmic portion of the chain corresponds to 200 to 218; it reads RELRDTLVLLSGMLGTYLN. Residues 219–239 form a helical membrane-spanning segment; the sequence is ILALWMLFLLFASWIAFVMFE. Residues 240 to 245 are Vacuolar-facing; it reads DTQQGL. The pore-forming intramembrane region spans 246 to 260; that stretch reads TVFTSYGATLYQMFI. Residues 261–282 are Vacuolar-facing; that stretch reads LFTTSNNPDVWIPAYKSSRWSS. The chain crosses the membrane as a helical span at residues 283–303; it reads VFFVLYVLIGVYFVTNLILAV. The Cytoplasmic segment spans residues 304–428; that stretch reads VYDSFKEQLA…LSQQLRAFVR (125 aa). EF-hand domains follow at residues 322 to 357 and 363 to 398; these read MKRR…LTNY and ISKE…IALR. The chain crosses the membrane as a helical span at residues 429 to 449; that stretch reads SPNFGYAISFILIINFIAVVV. Topologically, residues 450–465 are vacuolar; it reads ETTLDIEESSAQKPWQ. A helical transmembrane segment spans residues 466–486; the sequence is VAEFVFGWIYVLEMALKIYTY. Over 487-498 the chain is Cytoplasmic; that stretch reads GFENYWREGANR. The helical transmembrane segment at 499–519 threads the bilayer; it reads FDFLVTWVIVIGETATFITPD. The Vacuolar portion of the chain corresponds to 520-528; sequence ENTFFSNGE. A helical; Voltage-sensor membrane pass occupies residues 529 to 546; the sequence is WIRYLLLARMLRLIRLLM. Topologically, residues 547–557 are cytoplasmic; sequence NVQRYRAFIAT. The chain crosses the membrane as a helical span at residues 558-578; the sequence is FITLIPSLMPYLGTIFCVLCI. The Vacuolar segment spans residues 579–615; that stretch reads YCSIGVQVFGGLVNAGNKKLFETELAEDDYLLFNFND. An intramembrane region (pore-forming) is located at residues 616–630; the sequence is YPNGMVTLFNLLVMG. Topologically, residues 631–651 are vacuolar; that stretch reads NWQVWMESYKDLTGTWWSITY. Residues 652–672 traverse the membrane as a helical segment; sequence FVSFYVITILLLLNLVVAFVL. Topologically, residues 673-733 are cytoplasmic; sequence EAFFTELDLE…SKPECSTSDT (61 aa). The span at 686-695 shows a compositional bias: basic and acidic residues; it reads KCQGQDSQEK. The disordered stretch occupies residues 686-711; sequence KCQGQDSQEKRNRRRSAGSKSRSQRV.

Belongs to the calcium channel alpha-1 subunit (TC 1.A.1.11) family. Two pore calcium channel subfamily. As to quaternary structure, homodimer. Ubiquitously expressed.

It is found in the vacuole membrane. With respect to regulation, inhibited by Al(3+). In terms of biological role, functions as a voltage-gated inward-rectifying Ca(2+) channel (VDCC) across the vacuole membrane. Is one of the essential components of the slow vacuolar (SV) channel. Acts as the major ROS-responsive Ca(2+) channel and is the possible target of Al-dependent inhibition. Involved in the regulation of germination and stomatal movement. The chain is Two pore calcium channel protein 1 (TPC1) from Arabidopsis thaliana (Mouse-ear cress).